The chain runs to 91 residues: Putative membrane protein insertion efficiency factor (91 aa).

It belongs to the UPF0161 family.

It is found in the cell inner membrane. In terms of biological role, could be involved in insertion of integral membrane proteins into the membrane. This chain is Putative membrane protein insertion efficiency factor, found in Saccharophagus degradans (strain 2-40 / ATCC 43961 / DSM 17024).